The sequence spans 364 residues: Probable protein phosphatase methylesterase 1 (364 aa).

A disordered region spans residues 1 to 53; it reads MSDDKLDTLPDLQSETSHVTTPHRQNDLLRQAVTHGRPPPVPSTSTSGKKREM. Positions 11-23 are enriched in polar residues; it reads DLQSETSHVTTPH. Residues S164, D190, and H316 contribute to the active site.

It belongs to the AB hydrolase superfamily.

It carries out the reaction [phosphatase 2A protein]-C-terminal L-leucine methyl ester + H2O = [phosphatase 2A protein]-C-terminal L-leucine + methanol + H(+). Demethylates proteins that have been reversibly carboxymethylated. This Caenorhabditis elegans protein is Probable protein phosphatase methylesterase 1.